The sequence spans 516 residues: Homeobox protein 6 (516 aa).

Positions 22-31 (NYDFDNKNNS) are enriched in low complexity. Disordered stretches follow at residues 22–140 (NYDF…PNCN), 200–256 (SLNN…SSPS), and 268–348 (DEND…NNGD). Gly residues predominate over residues 32 to 41 (IGGGGGGGGS). 3 stretches are compositionally biased toward low complexity: residues 42–59 (SSSRSSSSRSSSNRSSSG), 66–78 (SNSSSSINNIINS), and 101–132 (TTTTTTTTTTTTTTTTTKNENISSSESENSSS). Positions 284–346 (NNNNNNNNNN…NNNNTNTNNN (63 aa)) are enriched in low complexity. 2 DNA-binding regions (homeobox) span residues 362–421 (KSGQ…SKSG) and 424–483 (SYAK…NKLS). The tract at residues 483–516 (SSKAIQDKDNQDNDNNNSNNNENNDDSYSDEGLF) is disordered. Over residues 495-504 (NDNNNSNNNE) the composition is skewed to low complexity. Acidic residues predominate over residues 505–516 (NNDDSYSDEGLF).

It is found in the nucleus. Functionally, putative transcription factor. The chain is Homeobox protein 6 (hbx6) from Dictyostelium discoideum (Social amoeba).